Here is a 171-residue protein sequence, read N- to C-terminus: Peptide deformylase (171 aa).

Fe cation is bound by residues Cys94 and His136. Residue Glu137 is part of the active site. Fe cation is bound at residue His140.

The protein belongs to the polypeptide deformylase family. Fe(2+) serves as cofactor.

It catalyses the reaction N-terminal N-formyl-L-methionyl-[peptide] + H2O = N-terminal L-methionyl-[peptide] + formate. Its function is as follows. Removes the formyl group from the N-terminal Met of newly synthesized proteins. Requires at least a dipeptide for an efficient rate of reaction. N-terminal L-methionine is a prerequisite for activity but the enzyme has broad specificity at other positions. This chain is Peptide deformylase, found in Afipia carboxidovorans (strain ATCC 49405 / DSM 1227 / KCTC 32145 / OM5) (Oligotropha carboxidovorans).